A 333-amino-acid polypeptide reads, in one-letter code: Cinnamoyl-CoA reductase 1 (333 aa).

NADP(+) contacts are provided by residues 13-19, Arg-38, Lys-44, 64-65, 84-86, Tyr-157, Lys-161, 184-187, and Ser-199; these read GAGGFIA, DL, TAS, and PVLV. Cys-150 and Cys-158 are oxidised to a cystine. Catalysis depends on Lys-161, which acts as the Proton donor.

Belongs to the NAD(P)-dependent epimerase/dehydratase family. Dihydroflavonol-4-reductase subfamily. In terms of processing, the formation of a reversible disulfide bond reduces activity by perturbing the positioning of nearby catalytic residues. As to expression, expressed in flowers, leaves and stems.

Its subcellular location is the cytoplasm. It carries out the reaction (E)-coniferaldehyde + NADP(+) + CoA = (E)-feruloyl-CoA + NADPH + H(+). It catalyses the reaction (E)-4-coumaraldehyde + NADP(+) + CoA = (E)-4-coumaroyl-CoA + NADPH + H(+). The enzyme catalyses (E)-sinapaldehyde + NADP(+) + CoA = (E)-sinapoyl-CoA + NADPH + H(+). The catalysed reaction is (E)-cinnamaldehyde + NADP(+) + CoA = (E)-cinnamoyl-CoA + NADPH + H(+). It participates in aromatic compound metabolism; phenylpropanoid biosynthesis. Inhibited by sodium iodide-mediated oxidation. Involved in the latter stages of lignin biosynthesis. Catalyzes one of the last steps of monolignol biosynthesis, the conversion of cinnamoyl-CoAs into their corresponding cinnamaldehydes. Mediates the conversion of feruloyl CoA to coniferylaldehyde. Also active toward p-coumaroyl-CoA and sinapoyl-CoA. Involved in the production of floral volatile phenylpropanoids in flowers of fragrant cultivars (e.g. cv. Mitchell and cv. V26) from cinnamic acid, a common precursor with the anthocyanin biosynthesis pathway involved in flower pigmentation. This Petunia hybrida (Petunia) protein is Cinnamoyl-CoA reductase 1.